Here is a 633-residue protein sequence, read N- to C-terminus: Leucine-rich repeat and IQ domain-containing protein 3 (633 aa).

LRR repeat units lie at residues 51–72, 73–94, and 98–119; these read SLRVCIFSNNFLTDIQPLQSCK, KLIKLDLHGNQIKTLPDKNFWS, and NLKLLYLHDNGFSKLKNICVLS. Positions 132-179 constitute an LRRCT domain; sequence CPVSLKKGYRHVLVNSIWPLKALDHHVISDEEIIQNWRLPERFKTFSP. One can recognise an IQ domain in the interval 215–244; that stretch reads HNSPVLIIQRWIRGFIVRKHLSPYFKHKKH. Residues 324 to 343 form a disordered region; sequence SKQPRHHIHKGQKAMKAESE. Residues 325-336 are compositionally biased toward basic residues; sequence KQPRHHIHKGQK. Residues 556–617 are a coiled coil; the sequence is IEKWEEQKYK…AKVEYIKTFY (62 aa).

In Mus musculus (Mouse), this protein is Leucine-rich repeat and IQ domain-containing protein 3 (Lrriq3).